We begin with the raw amino-acid sequence, 458 residues long: Zinc finger protein 239 (458 aa).

Lys108 is covalently cross-linked (Glycyl lysine isopeptide (Lys-Gly) (interchain with G-Cter in SUMO2)). A Phosphoserine modification is found at Ser191. 9 C2H2-type zinc fingers span residues 207–229 (YECS…QRDH), 235–257 (YKCE…QAVH), 263–285 (YKCD…HAVH), 291–313 (YKCD…QRVH), 319–341 (YECE…QRVH), 347–369 (YKCG…RCIH), 375–397 (YQCY…LRVH), 403–425 (YHCG…QRVH), and 431–453 (YECS…QRVH).

Belongs to the krueppel C2H2-type zinc-finger protein family.

It is found in the nucleus. Its function is as follows. May be involved in transcriptional regulation. The chain is Zinc finger protein 239 (ZNF239) from Homo sapiens (Human).